Reading from the N-terminus, the 362-residue chain is Probable endopolygalacturonase II (362 aa).

Positions 1-20 (MHSFASLLAYGLAAGATLAS) are cleaved as a signal peptide. A propeptide spanning residues 21–27 (ASPIEAR) is cleaved from the precursor. C30 and C45 are joined by a disulfide. Residues 156–186 (SDDITLTDITINNADGDSLGGHNTDAFDVGN) form a PbH1 1 repeat. The active-site Proton donor is the D201. A disulfide bond links C203 and C219. PbH1 repeat units lie at residues 209–229 (GENI…SIGS), 238–259 (VKNV…RIKT), 267–289 (VSEI…VIQQ), and 301–322 (TNGV…DSKA). The active site involves H223. An N-linked (GlcNAc...) asparagine glycan is attached at N240. Cystine bridges form between C329–C334 and C353–C362.

The protein belongs to the glycosyl hydrolase 28 family.

It is found in the secreted. It carries out the reaction (1,4-alpha-D-galacturonosyl)n+m + H2O = (1,4-alpha-D-galacturonosyl)n + (1,4-alpha-D-galacturonosyl)m.. Functionally, involved in maceration and soft-rotting of plant tissue. Hydrolyzes the 1,4-alpha glycosidic bonds of de-esterified pectate in the smooth region of the plant cell wall. In Aspergillus kawachii (strain NBRC 4308) (White koji mold), this protein is Probable endopolygalacturonase II (pgaII).